A 432-amino-acid chain; its full sequence is D-amino acid dehydrogenase (432 aa).

3–17 (VVILGSGVVGVTSAW) provides a ligand contact to FAD.

The protein belongs to the DadA oxidoreductase family. FAD is required as a cofactor.

The catalysed reaction is a D-alpha-amino acid + A + H2O = a 2-oxocarboxylate + AH2 + NH4(+). It functions in the pathway amino-acid degradation; D-alanine degradation; NH(3) and pyruvate from D-alanine: step 1/1. Oxidative deamination of D-amino acids. The polypeptide is D-amino acid dehydrogenase (Salmonella dublin (strain CT_02021853)).